A 1156-amino-acid chain; its full sequence is Reverse gyrase 1 (1156 aa).

An RG N-terminal-type zinc finger spans residues 1 to 38 (MLKVYYTFGCPNCGGPIDDEHLLAGVPCSKCLPGRVEN). Zn(2+) is bound by residues Cys-10, Cys-13, Cys-28, and Cys-31. ATP is bound by residues Gln-86 and 103–110 (APTGLGKT). A Helicase ATP-binding domain is found at 90–277 (IKRLAKSESF…ALRTLIGFEP (188 aa)). The short motif at 184–187 (DDSD) is the DEAD box element. Residues 570–1156 (INIKTILLIV…VNSLKLDTNV (587 aa)) form a topoisomerase I region. The 163-residue stretch at 574-736 (TILLIVESPT…NIYRIKYHEI (163 aa)) folds into the Toprim domain. Glu-580 contacts Mg(2+). An RG C-terminal-type zinc finger spans residues 655–682 (IYKCYNCGKTFTIKSNTCPYCGSVFISS). Zn(2+) is bound by residues Cys-658, Cys-661, Cys-672, and Cys-675. Residue Asp-705 participates in Mg(2+) binding. The 392-residue stretch at 752 to 1143 (NMNLVKSQIV…DLHKEITQIS (392 aa)) folds into the Topo IA-type catalytic domain. The active-site O-(5'-phospho-DNA)-tyrosine intermediate is Tyr-895.

It in the N-terminal section; belongs to the DEAD box helicase family. DDVD subfamily. In the C-terminal section; belongs to the type IA topoisomerase family. As to quaternary structure, monomer. Zn(2+) serves as cofactor. Requires Mg(2+) as cofactor.

The protein localises to the cytoplasm. The enzyme catalyses ATP + H2O = ADP + phosphate + H(+). Modifies the topological state of DNA by introducing positive supercoils in an ATP-dependent process, increasing the linking number in steps of +1. Binds to single-stranded DNA, transiently cleaves and then rejoins the ends, introducing a positive supercoil in the process. The scissile phosphodiester is attacked by the catalytic tyrosine of the enzyme, resulting in the formation of a DNA-(5'-phosphotyrosyl)-enzyme intermediate. Probably involved in rewinding DNA strands in regions of the chromosome that have opened up to allow replication, transcription, DNA repair and/or for DNA protection. This Sulfurisphaera tokodaii (strain DSM 16993 / JCM 10545 / NBRC 100140 / 7) (Sulfolobus tokodaii) protein is Reverse gyrase 1.